The following is a 136-amino-acid chain: Large ribosomal subunit protein uL16 (136 aa).

It belongs to the universal ribosomal protein uL16 family. As to quaternary structure, part of the 50S ribosomal subunit.

In terms of biological role, binds 23S rRNA and is also seen to make contacts with the A and possibly P site tRNAs. This Shewanella piezotolerans (strain WP3 / JCM 13877) protein is Large ribosomal subunit protein uL16.